The chain runs to 358 residues: Extracellular phospholipase C (358 aa).

It is found in the secreted. In Dickeya chrysanthemi (Pectobacterium chrysanthemi), this protein is Extracellular phospholipase C (plcA).